We begin with the raw amino-acid sequence, 317 residues long: MSGGLDVLQMKEEDVLKFLAAGTHLGGTNLDFQMEQYVYKRKSDGIYIINLKKTWEKLLLAARAIVAIENPADVCVISSRNTGQRACLKFASGTGATTFAGRFTPGTFTNQIQAAFREPRLLIVTDPRADHQPLTEASYVNIPTIALCNTDSPLRYVDIAIPCNNKGPHSVGLMWWMLAREVLRMRGTISREHPWEVMPDLYFYRDPEEIEKEEQAAAEKAVGKEEFQGEWSAPVADIAQLEVPDWSEGVQVPSVPIQQFPAGIEAATAAAAVVAAKPGPTTEGYSEDWSAQPATEDWSAAPTAQAGDWGGSTAEWS.

Ser-2 carries the N-acetylserine modification. 2 laminin-binding regions span residues 161 to 180 (IPCN…MLAR) and 205 to 229 (RDPE…EFQG). [DE]-W-[ST] repeat units follow at residues 230–232 (EWS), 245–247 (DWS), 288–290 (DWS), 297–299 (DWS), and 315–317 (EWS). The segment at 242–317 (EVPDWSEGVQ…DWGGSTAEWS (76 aa)) is laminin-binding. Residues 278–317 (PGPTTEGYSEDWSAQPATEDWSAAPTAQAGDWGGSTAEWS) are disordered.

The protein belongs to the universal ribosomal protein uS2 family. As to quaternary structure, monomer (37LRP) and homodimer (67LR). Component of the small ribosomal subunit. Mature ribosomes consist of a small (40S) and a large (60S) subunit. The 40S subunit contains about 33 different proteins and 1 molecule of RNA (18S). The 60S subunit contains about 49 different proteins and 3 molecules of RNA (28S, 5.8S and 5S). Interacts with rps21. Interacts with several laminins including at least lamb1. Interacts with mdk. Post-translationally, acylated. Acylation may be a prerequisite for conversion of the monomeric 37 kDa laminin receptor precursor (37LRP) to the mature dimeric 67 kDa laminin receptor (67LR), and may provide a mechanism for membrane association. In terms of processing, cleaved by stromelysin-3 (ST3) at the cell surface. Cleavage by stromelysin-3 may be a mechanism to alter cell-extracellular matrix interactions.

Its subcellular location is the cell membrane. It localises to the cytoplasm. The protein resides in the nucleus. Its function is as follows. Required for the assembly and/or stability of the 40S ribosomal subunit. Required for the processing of the 20S rRNA-precursor to mature 18S rRNA in a late step of the maturation of 40S ribosomal subunits. Also functions as a cell surface receptor for laminin. Plays a role in cell adhesion to the basement membrane and in the consequent activation of signaling transduction pathways. May play a role in cell fate determination and tissue morphogenesis. In Ictalurus punctatus (Channel catfish), this protein is Small ribosomal subunit protein uS2 (rpsa).